We begin with the raw amino-acid sequence, 351 residues long: uncharacterized protein (351 aa).

Belongs to the bacterial luciferase oxidoreductase family.

This is an uncharacterized protein from Sinorhizobium fredii (strain NBRC 101917 / NGR234).